A 463-amino-acid polypeptide reads, in one-letter code: Cysteine--tRNA ligase (463 aa).

Cysteine 29 contacts Zn(2+). The 'HIGH' region motif lies at 31 to 41 (PTVYDFAHIGN). Zn(2+) is bound by residues cysteine 227, histidine 252, and glutamate 256. Positions 285–289 (KMSKS) match the 'KMSKS' region motif. Lysine 288 contributes to the ATP binding site.

Belongs to the class-I aminoacyl-tRNA synthetase family. In terms of assembly, monomer. Requires Zn(2+) as cofactor.

Its subcellular location is the cytoplasm. It carries out the reaction tRNA(Cys) + L-cysteine + ATP = L-cysteinyl-tRNA(Cys) + AMP + diphosphate. The protein is Cysteine--tRNA ligase of Rhodopseudomonas palustris (strain BisA53).